We begin with the raw amino-acid sequence, 90 residues long: U7-theraphotoxin-Hhn1e (90 aa).

The N-terminal stretch at 1 to 19 (MKTAIFTVVLALAVFAVLS) is a signal peptide. The propeptide occupies 20–50 (FGWEANEKALSEEFTELIHEKEAASETEARE). Cystine bridges form between Cys51–Cys65, Cys58–Cys70, and Cys64–Cys81.

Belongs to the neurotoxin 10 (Hwtx-1) family. 13 (Hntx-13) subfamily. In terms of tissue distribution, expressed by the venom gland.

It is found in the secreted. Ion channel inhibitor. The sequence is that of U7-theraphotoxin-Hhn1e from Cyriopagopus hainanus (Chinese bird spider).